We begin with the raw amino-acid sequence, 77 residues long: Small ribosomal subunit protein bS18 (77 aa).

It belongs to the bacterial ribosomal protein bS18 family. As to quaternary structure, part of the 30S ribosomal subunit. Forms a tight heterodimer with protein bS6.

Binds as a heterodimer with protein bS6 to the central domain of the 16S rRNA, where it helps stabilize the platform of the 30S subunit. The chain is Small ribosomal subunit protein bS18 from Bacillus cereus (strain ATCC 10987 / NRS 248).